The primary structure comprises 638 residues: Asparagine--tRNA ligase, cytoplasmic 2 (638 aa).

Basic and acidic residues predominate over residues 1–16 (MESHGKTHQKEHDNDL). Disordered stretches follow at residues 1 to 23 (MESHGKTHQKEHDNDLSPKPITL) and 62 to 87 (VKKNSPPPPLPVVAAPSPSSGGDQAH).

Belongs to the class-II aminoacyl-tRNA synthetase family.

The protein localises to the cytoplasm. It localises to the cytosol. The catalysed reaction is tRNA(Asn) + L-asparagine + ATP = L-asparaginyl-tRNA(Asn) + AMP + diphosphate + H(+). The polypeptide is Asparagine--tRNA ligase, cytoplasmic 2 (Arabidopsis thaliana (Mouse-ear cress)).